The chain runs to 351 residues: Peptide chain release factor 1 (351 aa).

N5-methylglutamine is present on Gln-233.

This sequence belongs to the prokaryotic/mitochondrial release factor family. Methylated by PrmC. Methylation increases the termination efficiency of RF1.

The protein resides in the cytoplasm. Its function is as follows. Peptide chain release factor 1 directs the termination of translation in response to the peptide chain termination codons UAG and UAA. The protein is Peptide chain release factor 1 of Treponema pallidum subsp. pallidum (strain SS14).